Reading from the N-terminus, the 89-residue chain is Small ribosomal subunit protein uS15 (89 aa).

The protein belongs to the universal ribosomal protein uS15 family. Part of the 30S ribosomal subunit. Forms a bridge to the 50S subunit in the 70S ribosome, contacting the 23S rRNA.

Functionally, one of the primary rRNA binding proteins, it binds directly to 16S rRNA where it helps nucleate assembly of the platform of the 30S subunit by binding and bridging several RNA helices of the 16S rRNA. In terms of biological role, forms an intersubunit bridge (bridge B4) with the 23S rRNA of the 50S subunit in the ribosome. The polypeptide is Small ribosomal subunit protein uS15 (Exiguobacterium sibiricum (strain DSM 17290 / CCUG 55495 / CIP 109462 / JCM 13490 / 255-15)).